Reading from the N-terminus, the 235-residue chain is Probable ribonuclease P protein subunit 3 (235 aa).

Belongs to the eukaryotic/archaeal RNase P protein component 3 family.

The protein localises to the nucleus. The catalysed reaction is Endonucleolytic cleavage of RNA, removing 5'-extranucleotides from tRNA precursor.. Functionally, part of ribonuclease P, a protein complex that generates mature tRNA molecules by cleaving their 5'-ends. The polypeptide is Probable ribonuclease P protein subunit 3 (Schizosaccharomyces pombe (strain 972 / ATCC 24843) (Fission yeast)).